The following is a 201-amino-acid chain: Probable GTP-binding protein EngB (201 aa).

The 176-residue stretch at Arg22–Glu197 folds into the EngB-type G domain. GTP contacts are provided by residues Gly30–Ser37, Gly57–Leu61, Asp75–Gly78, Thr142–Asp145, and Val173–Ser178. Residues Ser37 and Thr59 each contribute to the Mg(2+) site.

This sequence belongs to the TRAFAC class TrmE-Era-EngA-EngB-Septin-like GTPase superfamily. EngB GTPase family. The cofactor is Mg(2+).

Its function is as follows. Necessary for normal cell division and for the maintenance of normal septation. In Porphyromonas gingivalis (strain ATCC 33277 / DSM 20709 / CIP 103683 / JCM 12257 / NCTC 11834 / 2561), this protein is Probable GTP-binding protein EngB.